Here is a 221-residue protein sequence, read N- to C-terminus: Small ribosomal subunit protein uS3 (221 aa).

One can recognise a KH type-2 domain in the interval 39 to 108 (IRKFVKKELF…NVLINIVEVK (70 aa)).

Belongs to the universal ribosomal protein uS3 family. Part of the 30S ribosomal subunit. Forms a tight complex with proteins S10 and S14.

Functionally, binds the lower part of the 30S subunit head. Binds mRNA in the 70S ribosome, positioning it for translation. The protein is Small ribosomal subunit protein uS3 of Clostridium beijerinckii (strain ATCC 51743 / NCIMB 8052) (Clostridium acetobutylicum).